A 769-amino-acid chain; its full sequence is Transferrin receptor protein 1 (769 aa).

The Cytoplasmic portion of the chain corresponds to 1–70 (MMDQARSAFS…KPKRFNGFIC (70 aa)). Residues 1-70 (MMDQARSAFS…KPKRFNGFIC (70 aa)) form a mediates interaction with SH3BP4 region. 2 positions are modified to phosphoserine: serine 10 and serine 19. The residue at position 20 (tyrosine 20) is a Phosphotyrosine. The Endocytosis signal motif lies at 20-23 (YTRF). Position 21 is a phosphothreonine (threonine 21). At serine 24 the chain carries Phosphoserine. Positions 61–64 (KPKR) match the Stop-transfer sequence motif. Cysteine 70 carries S-palmitoyl cysteine lipidation. A helical; Signal-anchor for type II membrane protein membrane pass occupies residues 71-91 (YGTIAIILFFLIGFMIGYLGY). Topologically, residues 92–769 (CKRVEAKSEC…GDIWDIDNEF (678 aa)) are extracellular. Threonine 107 carries an O-linked (GalNAc...) threonine glycan. The PA domain maps to 232–322 (SKAATVTGRL…GTGDPYTPGF (91 aa)). N-linked (GlcNAc...) asparagine glycosylation is found at asparagine 260 and asparagine 326. A ligand-binding region spans residues 578-769 (TMDVYEKLIQ…GDIWDIDNEF (192 aa)). Positions 655-657 (RGD) match the Cell attachment site motif. 2 N-linked (GlcNAc...) asparagine glycosylation sites follow: asparagine 731 and asparagine 736.

It belongs to the peptidase M28 family. M28B subfamily. In terms of assembly, homodimer; disulfide-linked. Binds one transferrin molecule per subunit. Interacts with SH3BP4. Homodimer; disulfide-linked. Binds one transferrin or HFE molecule per subunit. Binds the HLA class II histocompatibility antigen, DR1. Interacts with SH3BP3. Interacts with STEAP3; facilitates TFRC endocytosis in erythroid precursor cells. Post-translationally, stearoylated by ZDHHC6 which inhibits TFRC-mediated activation of the JNK pathway and promotes mitochondrial fragmentation. Stearoylation does not affect iron uptake. N- and O-glycosylated, phosphorylated and palmitoylated.

It localises to the cell membrane. Its subcellular location is the melanosome. Its function is as follows. Cellular uptake of iron occurs via receptor-mediated endocytosis of ligand-occupied transferrin receptor into specialized endosomes. Endosomal acidification leads to iron release. The apotransferrin-receptor complex is then recycled to the cell surface with a return to neutral pH and the concomitant loss of affinity of apotransferrin for its receptor. Transferrin receptor is necessary for development of erythrocytes and the nervous system. Positively regulates T and B cell proliferation through iron uptake. Acts as a lipid sensor that regulates mitochondrial fusion by regulating activation of the JNK pathway. When dietary levels of stearate (C18:0) are low, promotes activation of the JNK pathway, resulting in HUWE1-mediated ubiquitination and subsequent degradation of the mitofusin MFN2 and inhibition of mitochondrial fusion. When dietary levels of stearate (C18:0) are high, TFRC stearoylation inhibits activation of the JNK pathway and thus degradation of the mitofusin MFN2. Mediates uptake of NICOL1 into fibroblasts where it may regulate extracellular matrix production. The sequence is that of Transferrin receptor protein 1 (TFRC) from Felis catus (Cat).